Consider the following 387-residue polypeptide: Succinate--CoA ligase [ADP-forming] subunit beta (387 aa).

One can recognise an ATP-grasp domain in the interval 9-236; that stretch reads KELFAKHNVP…KDATDPLELK (228 aa). Residues K45, 52–54, S94, and E99 contribute to the ATP site; that span reads GRG. Mg(2+)-binding residues include N191 and D205. Substrate contacts are provided by residues N256 and 318–320; that span reads GIT.

This sequence belongs to the succinate/malate CoA ligase beta subunit family. In terms of assembly, heterotetramer of two alpha and two beta subunits. The cofactor is Mg(2+).

The enzyme catalyses succinate + ATP + CoA = succinyl-CoA + ADP + phosphate. It catalyses the reaction GTP + succinate + CoA = succinyl-CoA + GDP + phosphate. The protein operates within carbohydrate metabolism; tricarboxylic acid cycle; succinate from succinyl-CoA (ligase route): step 1/1. Functionally, succinyl-CoA synthetase functions in the citric acid cycle (TCA), coupling the hydrolysis of succinyl-CoA to the synthesis of either ATP or GTP and thus represents the only step of substrate-level phosphorylation in the TCA. The beta subunit provides nucleotide specificity of the enzyme and binds the substrate succinate, while the binding sites for coenzyme A and phosphate are found in the alpha subunit. This Mycolicibacterium gilvum (strain PYR-GCK) (Mycobacterium gilvum (strain PYR-GCK)) protein is Succinate--CoA ligase [ADP-forming] subunit beta.